Reading from the N-terminus, the 467-residue chain is Glutamate--tRNA ligase (467 aa).

The short motif at 10 to 20 (PSPTGYLHVGG) is the 'HIGH' region element. 4 residues coordinate Zn(2+): Cys99, Cys101, Cys126, and Glu128. A 'KMSKS' region motif is present at residues 237 to 241 (RLSKR). Lys240 contributes to the ATP binding site.

This sequence belongs to the class-I aminoacyl-tRNA synthetase family. Glutamate--tRNA ligase type 1 subfamily. Monomer. Zn(2+) serves as cofactor.

The protein localises to the cytoplasm. It carries out the reaction tRNA(Glu) + L-glutamate + ATP = L-glutamyl-tRNA(Glu) + AMP + diphosphate. Catalyzes the attachment of glutamate to tRNA(Glu) in a two-step reaction: glutamate is first activated by ATP to form Glu-AMP and then transferred to the acceptor end of tRNA(Glu). This chain is Glutamate--tRNA ligase, found in Geotalea uraniireducens (strain Rf4) (Geobacter uraniireducens).